Consider the following 100-residue polypeptide: Cytochrome c2 iso-1 (100 aa).

Residues cysteine 11, cysteine 14, histidine 15, and methionine 76 each coordinate heme c.

This sequence belongs to the cytochrome c family. Binds 1 heme c group covalently per subunit.

In terms of biological role, cytochrome c2 is found mainly in purple, non-sulfur, photosynthetic bacteria where it functions as the electron donor to the oxidized bacteriochlorophyll in the photophosphorylation pathway. However, it may also have a role in the respiratory chain and is found in some non-photosynthetic bacteria. The protein is Cytochrome c2 iso-1 of Magnetospirillum molischianum (Rhodospirillum molischianum).